A 369-amino-acid polypeptide reads, in one-letter code: Glutamate 5-kinase (369 aa).

An ATP-binding site is contributed by Lys8. The substrate site is built by Ser49, Asp136, and Asn148. ATP contacts are provided by residues Thr168–Asp169 and Thr211–Lys217. Residues Thr276–Gly354 form the PUA domain.

It belongs to the glutamate 5-kinase family.

The protein resides in the cytoplasm. The enzyme catalyses L-glutamate + ATP = L-glutamyl 5-phosphate + ADP. It functions in the pathway amino-acid biosynthesis; L-proline biosynthesis; L-glutamate 5-semialdehyde from L-glutamate: step 1/2. Catalyzes the transfer of a phosphate group to glutamate to form L-glutamate 5-phosphate. The chain is Glutamate 5-kinase from Rippkaea orientalis (strain PCC 8801 / RF-1) (Cyanothece sp. (strain PCC 8801)).